The chain runs to 332 residues: uncharacterized protein (332 aa).

Positions 1-23 are cleaved as a signal peptide; sequence MKRIPSLIIGLLLILATWHSVLA. A helical membrane pass occupies residues 231–251; that stretch reads SFFLGMIVTLIILAPVILYLW.

It is found in the membrane. This is an uncharacterized protein from Pyrococcus horikoshii (strain ATCC 700860 / DSM 12428 / JCM 9974 / NBRC 100139 / OT-3).